The chain runs to 839 residues: Glycerol-3-phosphate acyltransferase (839 aa).

An HXXXXD motif motif is present at residues 309–314 (CHRSHI).

It belongs to the GPAT/DAPAT family.

The protein resides in the cell inner membrane. It carries out the reaction sn-glycerol 3-phosphate + an acyl-CoA = a 1-acyl-sn-glycero-3-phosphate + CoA. It functions in the pathway phospholipid metabolism; CDP-diacylglycerol biosynthesis; CDP-diacylglycerol from sn-glycerol 3-phosphate: step 1/3. This Pseudomonas fluorescens (strain SBW25) protein is Glycerol-3-phosphate acyltransferase.